The following is a 292-amino-acid chain: Transcription factor-like protein DPA (292 aa).

Residues 1 to 25 are disordered; it reads MSMEMELFVTPEKQRQHPSVSVEKT. The DNA-binding element occupies 51-135; that stretch reads GGGLRQFSVM…KKEIRWKGLP (85 aa). The DEF box motif lies at 101–135; sequence NEKNIRRRVYDALNVFMALDIIARDKKEIRWKGLP. A coiled-coil region spans residues 163–184; sequence LKELREKVSSLESLMSRNQEMV. The segment at 246–280 is disordered; sequence QEQNRVSSSSSTHHQSQHSSAHSSSSSCIASGTSG. Residues 252 to 280 are compositionally biased toward low complexity; the sequence is SSSSSTHHQSQHSSAHSSSSSCIASGTSG.

It belongs to the E2F/DP family. In terms of assembly, heterodimer with E2F. Interacts preferentially with E2FA and E2FB, but also with E2FC. Strongly expressed in the actively dividing tissues of the shoot apical meristem, young leaf primordia, the vascular tissues of the maturing leaf primordia and axillary buds.

The protein resides in the cytoplasm. It is found in the nucleus. Involved in the regulation of the G1/S transition. Increases the DNA binding and the transactivation activities of E2F proteins after heterodimerization. The complex DPA/E2FA promotes cell division and acts as a regulator of the endocycle. Positively regulates the activity of S phase-specific genes. This chain is Transcription factor-like protein DPA (DPA), found in Arabidopsis thaliana (Mouse-ear cress).